Reading from the N-terminus, the 481-residue chain is Acyl-CoA ligase cnsG (481 aa).

Positions 3–11 (SPQLPPSMK) match the PTS2-type peroxisomal targeting signal motif. Residues 124–132 (KSGTTGNPK), 263–268 (NGYGMT), D353, and R368 each bind ATP. Residue T268 coordinates substrate. CoA contacts are provided by residues 376-378 (GGL) and 446-448 (AIF). ATP is bound at residue K466.

The protein belongs to the ATP-dependent AMP-binding enzyme family.

The protein operates within alkaloid biosynthesis. In terms of biological role, acyl-CoA ligase; part of the gene cluster that mediates the biosynthesis of communesins, a prominent class of indole alkaloids with great potential as pharmaceuticals. Communesins are biosynthesized by the coupling of tryptamine and aurantioclavine, two building blocks derived from L-tryptophan. The L-tryptophan decarboxylase cnsB converts L-tryptophan to tryptamine, whereas the tryptophan dimethylallyltransferase cnsF converts L-tryptophan to 4-dimethylallyl tryptophan which is further transformed to aurantioclavine by the aurantioclavine synthase cnsA, probably aided by the catalase cnsD. The cytochrome P450 monooxygenase cnsC catalyzes the heterodimeric coupling between the two different indole moieties, tryptamine and aurantioclavine, to construct vicinal quaternary stereocenters and yield the heptacyclic communesin scaffold. The O-methyltransferase cnsE then methylates the communesin scaffold to produce communesin K, the simplest characterized communesin that contains the heptacyclic core. The dioxygenase cnsJ converts communesin K into communesin I. Acylation to introduce the hexadienyl group at position N16 of communesin I by the acyltransferase cnsK leads to the production of communesin B. The hexadienyl group is produced by the highly reducing polyketide synthase cnsI, before being hydrolytically removed from cnsI by the serine hydrolase cnsH, converted into hexadienyl-CoA by the CoA ligase cnsG, and then transferred to communesin I by cnsK. Surprisingly, cnsK may also be a promiscuous acyltransferase that can tolerate a range of acyl groups, including acetyl-, propionyl-, and butyryl-CoA, which lead to communesins A, G and H respectively. The roles of the alpha-ketoglutarate-dependent dioxygenases cnsM and cnsP have still to be determined. This Penicillium expansum (Blue mold rot fungus) protein is Acyl-CoA ligase cnsG.